The primary structure comprises 258 residues: MAIELYSQREIEKIRKASQIVAEVLHIVAENVKPGVSTWDLEMIARKETEKRGAKPAFLGYKPPFSDVRYPAALCISINDEVVHGLPKKEKVIKEGDVVSIDFGAIYDGYAGDSAITVIAGKGSPEAQKLLEATKEALYNAIEKALPGKKVGDITKAIHETAEKYGFKTILRYGGHGVGRKVHQEPFVPNNVKDIGKKNPRLRQGMVIAIEPMLSIGTEETVEDGDGWTVKTKDGSLAAHFEHTVAITKKGPVILTEL.

H84 is a binding site for substrate. A divalent metal cation is bound by residues D102, D113, and H176. Substrate is bound at residue H183. Residues E211 and E242 each coordinate a divalent metal cation.

It belongs to the peptidase M24A family. Methionine aminopeptidase type 1 subfamily. Monomer. Requires Co(2+) as cofactor. Zn(2+) serves as cofactor. It depends on Mn(2+) as a cofactor. Fe(2+) is required as a cofactor.

The catalysed reaction is Release of N-terminal amino acids, preferentially methionine, from peptides and arylamides.. Functionally, removes the N-terminal methionine from nascent proteins. The N-terminal methionine is often cleaved when the second residue in the primary sequence is small and uncharged (Met-Ala-, Cys, Gly, Pro, Ser, Thr, or Val). Requires deformylation of the N(alpha)-formylated initiator methionine before it can be hydrolyzed. This Aquifex aeolicus (strain VF5) protein is Methionine aminopeptidase.